Consider the following 450-residue polypeptide: Tripartite motif-containing protein 64C (450 aa).

An RING-type zinc finger spans residues C15 to R56. The segment at S87–I128 adopts a B box-type zinc-finger fold. C92, H95, C114, and H120 together coordinate Zn(2+). The stretch at D191–R218 forms a coiled coil. Positions E269 to T450 constitute a B30.2/SPRY domain.

It belongs to the TRIM/RBCC family.

This is Tripartite motif-containing protein 64C (TRIM64C) from Homo sapiens (Human).